Here is a 316-residue protein sequence, read N- to C-terminus: Transmembrane protein 231 (316 aa).

A helical membrane pass occupies residues 23-43 (AALFLLLAAALTYIPPLLVAF). Asn194, Asn199, and Asn221 each carry an N-linked (GlcNAc...) asparagine glycan. Residues 262–282 (FWEMVKFAWVQYVSILLIFLW) traverse the membrane as a helical segment.

The protein belongs to the TMEM231 family. Part of the tectonic-like complex (also named B9 complex). Interacts with TMEM107.

It localises to the cell projection. The protein localises to the cilium membrane. Its function is as follows. Transmembrane component of the tectonic-like complex, a complex localized at the transition zone of primary cilia and acting as a barrier that prevents diffusion of transmembrane proteins between the cilia and plasma membranes. Required for ciliogenesis and sonic hedgehog/SHH signaling. This Homo sapiens (Human) protein is Transmembrane protein 231 (TMEM231).